We begin with the raw amino-acid sequence, 1430 residues long: MTVFRQENVDDYYDTGEELGSGQFAVVKKCREKSTGLQYAAKFIKKRRTKSSRRGVSREDIEREVSILKEIQHPNVITLHEVYENKTDVILILELVAGGELFDFLAEKESLTEEEATEFLKQILNGVYYLHSLQIAHFDLKPENIMLLDRNVPKPRIKIIDFGLAHKIDFGNEFKNIFGTPEFVAPEIVNYEPLGLEADMWSIGVITYILLSGASPFLGDTKQETLANVSAVNYEFEDEYFSNTSALAKDFIRRLLVKDPKKRMTIQDSLQHPWIKPKDTQQALSRKASAVNMEKFKKFAARKKWKQSVRLISLCQRLSRSFLSRSNMSVARSDDTLDEEDSFVMKAIIHAINDDNVPGLQHLLGSLSNYDVNQPNKHGTPPLLIAAGCGNIQILQLLIKRGSRIDVQDKGGSNAVYWAARHGHVDTLKFLSENKCPLDVKDKSGEMALHVAARYGHADVAQLLCSFGSNPNIQDKEEETPLHCAAWHGYYSVAKALCEAGCNVNIKNREGETPLLTASARGYHDIVECLAEHGADLNACDKDGHIALHLAVRRCQMEVIKTLLSQGCFVDYQDRHGNTPLHVACKDGNMPIVVALCEANCNLDISNKYGRTPLHLAANNGILDVVRYLCLMGASVEALTTDGKTAEDLARSEQHEHVAGLLARLRKDTHRGLFIQQLRPTQNLQPRIKLKLFGHSGSGKTTLVESLKCGLLRSFFRRRRPRLSSTNSSRFPPSPLASKPTVSVSINNLYPGCENVSVRSRSMMFEPGLTKGMLEVFVAPTHHPHCSADDQSTKAIDIQNAYLNGVGDFSVWEFSGNPVYFCCYDYFAANDPTSIHVVVFSLEEPYEIQLNQVIFWLSFLKSLVPVEEPIAFGGKLKNPLQVVLVATHADIMNVPRPAGGEFGYDKDTSLLKEIRNRFGNDLHISNKLFVLDAGASGSKDMKVLRNHLQEIRSQIVSVCPPMTHLCEKIISTLPSWRKLNGPNQLMSLQQFVYDVQDQLNPLASEEDLRRIAQQLHSTGEINIMQSETVQDVLLLDPRWLCTNVLGKLLSVETPRALHHYRGRYTVEDIQRLVPDSDVEELLQILDAMDICARDLSSGTMVDVPALIKTDNLHRSWADEEDEVMVYGGVRIVPVEHLTPFPCGIFHKVQVNLCRWIHQQSTEGDADIRLWVNGCKLANRGAELLVLLVNHGQGIEVQVRGLETEKIKCCLLLDSVCSTIENVMATTLPGLLTVKHYLSPQQLREHHEPVMIYQPRDFFRAQTLKETSLTNTMGGYKESFSSIMCFGCHDVYSQASLGMDIHASDLNLLTRRKLSRLLDPPDPLGKDWCLLAMNLGLPDLVAKYNTSNGAPKDFLPSPLHALLREWTTYPESTVGTLMSKLRELGRRDAADFLLKASSVFKINLDGNGQEAYASSCNSGTSYNSISSVVSR.

In terms of domain architecture, Protein kinase spans 13-275 (YDTGEELGSG…IQDSLQHPWI (263 aa)). ATP is bound by residues 19 to 27 (LGSGQFAVV), lysine 42, 94 to 96 (ELV), and glutamate 100. The active-site Proton acceptor is aspartate 139. An ATP-binding site is contributed by aspartate 161. Residues 267-334 (QDSLQHPWIK…RSNMSVARSD (68 aa)) form a calmodulin-binding region. Serine 289 carries the post-translational modification Phosphoserine; by RPS6KA1 and RPS6KA3. Residues 292–301 (NMEKFKKFAA) are autoinhibitory domain. Serine 308 bears the Phosphoserine; by autocatalysis mark. Phosphoserine is present on residues serine 319 and serine 333. ANK repeat units lie at residues 378–407 (HGTP…RIDV), 411–440 (GGSN…PLDV), 444–473 (SGEM…NPNI), 477–506 (EEET…NVNI), 510–539 (EGET…DLNA), 543–572 (DGHI…FVDY), 576–605 (HGNT…NLDI), and 609–638 (YGRT…SVEA). In terms of domain architecture, Roc spans 681–955 (TQNLQPRIKL…NHLQEIRSQI (275 aa)). The residue at position 734 (serine 734) is a Phosphoserine; by MAPK1. Residues 875 to 904 (KLKNPLQVVLVATHADIMNVPRPAGGEFGY) form an ANK 9 repeat. Position 1115 is a phosphoserine (serine 1115). The ANK 10 repeat unit spans residues 1162-1196 (EGDADIRLWVNGCKLANRGAELLVLLVNHGQGIEV). One can recognise a Death domain in the interval 1312–1396 (KLSRLLDPPD…DAADFLLKAS (85 aa)).

Belongs to the protein kinase superfamily. CAMK Ser/Thr protein kinase family. DAP kinase subfamily. As to quaternary structure, interacts with KLHL20. Interacts (via death domain) with MAPK1 and MAPK3. Interacts with MAP1B (via N-terminus). Interacts with PRKD1 in an oxidative stress-regulated manner. Interacts with PIN1, PDCD6, BECN1, TSC2 and STX1A. Interacts (via kinase domain) with DAPK3 (via kinase domain). Interacts with GRINB. Interacts (via death domain) with UNC5B (via death domain). Interacts with UNC5C (via death domain). Requires Mg(2+) as cofactor. In terms of processing, ubiquitinated by the BCR(KLHL20) E3 ubiquitin ligase complex, leading to its degradation by the proteasome. Removal of the C-terminal tail of isoform 2 (corresponding to amino acids 296-337 of isoform 2) by proteolytic cleavage stimulates maximally its membrane-blebbing function. Post-translationally, in response to mitogenic stimulation (PMA or EGF), phosphorylated at Ser-289; phosphorylation suppresses DAPK1 pro-apoptotic function. Autophosphorylation at Ser-308 inhibits its catalytic activity. Phosphorylation at Ser-734 by MAPK1 increases its catalytic activity and promotes cytoplasmic retention of MAPK1. Endoplasmic-stress can cause dephosphorylation at Ser-308. As to expression, isoform 2 is expressed in normal intestinal tissue as well as in colorectal carcinomas.

The protein localises to the cytoplasm. It localises to the cytoskeleton. It catalyses the reaction L-seryl-[protein] + ATP = O-phospho-L-seryl-[protein] + ADP + H(+). It carries out the reaction L-threonyl-[protein] + ATP = O-phospho-L-threonyl-[protein] + ADP + H(+). With respect to regulation, activated by Ca(2+)/calmodulin. Regulated by a locking mechanism, involving autophosphorylation at Ser-308 and calmodulin binding. In the inactive state, Ser-308 is phosphorylated. Activation involves its dephosphorylation and a release-of-autoinhibition mechanism where binding of calmodulin induces a conformational change that relieves the steric block of the active site by the autoinhibitory domain. Activity is modulated by UNC5B and NTN1. UNC5B activates it by inhibiting the phosphorylation at Ser-308, whereas NTN1 inhibits UNC5B-mediated activation of DAPK1. Endoplasmic-stress activates by causing Ser-308 dephosphorylation. Calcium/calmodulin-dependent serine/threonine kinase involved in multiple cellular signaling pathways that trigger cell survival, apoptosis, and autophagy. Regulates both type I apoptotic and type II autophagic cell deaths signal, depending on the cellular setting. The former is caspase-dependent, while the latter is caspase-independent and is characterized by the accumulation of autophagic vesicles. Phosphorylates PIN1 resulting in inhibition of its catalytic activity, nuclear localization, and cellular function. Phosphorylates TPM1, enhancing stress fiber formation in endothelial cells. Phosphorylates STX1A and significantly decreases its binding to STXBP1. Phosphorylates PRKD1 and regulates JNK signaling by binding and activating PRKD1 under oxidative stress. Phosphorylates BECN1, reducing its interaction with BCL2 and BCL2L1 and promoting the induction of autophagy. Phosphorylates TSC2, disrupting the TSC1-TSC2 complex and stimulating mTORC1 activity in a growth factor-dependent pathway. Phosphorylates RPS6, MYL9 and DAPK3. Acts as a signaling amplifier of NMDA receptors at extrasynaptic sites for mediating brain damage in stroke. Cerebral ischemia recruits DAPK1 into the NMDA receptor complex and it phosphorylates GRINB at Ser-1303 inducing injurious Ca(2+) influx through NMDA receptor channels, resulting in an irreversible neuronal death. Required together with DAPK3 for phosphorylation of RPL13A upon interferon-gamma activation which is causing RPL13A involvement in transcript-selective translation inhibition. Its function is as follows. Isoform 2 cannot induce apoptosis but can induce membrane blebbing. The chain is Death-associated protein kinase 1 (DAPK1) from Homo sapiens (Human).